Reading from the N-terminus, the 189-residue chain is Threonylcarbamoyl-AMP synthase (189 aa).

The region spanning 3-189 (TTSVTEAAEC…NALTGEVIRP (187 aa)) is the YrdC-like domain.

The protein belongs to the SUA5 family. TsaC subfamily.

The protein resides in the cytoplasm. The catalysed reaction is L-threonine + hydrogencarbonate + ATP = L-threonylcarbamoyladenylate + diphosphate + H2O. Its function is as follows. Required for the formation of a threonylcarbamoyl group on adenosine at position 37 (t(6)A37) in tRNAs that read codons beginning with adenine. Catalyzes the conversion of L-threonine, HCO(3)(-)/CO(2) and ATP to give threonylcarbamoyl-AMP (TC-AMP) as the acyladenylate intermediate, with the release of diphosphate. This chain is Threonylcarbamoyl-AMP synthase, found in Acinetobacter baumannii (strain ACICU).